A 1199-amino-acid chain; its full sequence is Chromosome partition protein Smc (1199 aa).

An ATP-binding site is contributed by 32–39 (PNGSGKSN). Positions 192–528 (GVAEFDEKSE…NARIKTLKDM (337 aa)) form a coiled coil. An SMC hinge domain is found at 546–658 (PGVVDIAGNL…VDNLENAKKL (113 aa)). Residues 691-1051 (IKVDIDMKKL…YLQLISEVQK (361 aa)) are a coiled coil.

It belongs to the SMC family. In terms of assembly, homodimer.

The protein localises to the cytoplasm. Functionally, required for chromosome condensation and partitioning. The polypeptide is Chromosome partition protein Smc (Methanococcus voltae).